A 356-amino-acid polypeptide reads, in one-letter code: MRKVLAIETSCDETSVSIVSNIGDNFKIHSNIIASQIEDHAKWGGVVPELAARKHLELLPFVLEKALAESEIKIEEIDYIASTVAPGLAGCLRVGSITARSLCMLHSKPFLGIHHLEGHLSSILFSENYPKKSFLTLLVSGGHTELIKVDDRRRMQRLGKSFDDAAGEAFDKVGRLLGLSYPGGPAIEKIAKNGDPMKFNLPKCKISDKKGGFLKYDFSFSGLKTAVLRLVERINLDGKDVPIPDIAASFERVVAEVLVERTIKCAKDHRLENVVLVGGVAANNTLRKMMINEASKKSIKVHLAPLNLCTDNAAMIGAAALFRIKFKDHLSSLKLGVAGRLSIEQANTLYEENPPF.

The Fe cation site is built by H115 and H119. Substrate-binding positions include 138-142 (LVSGG), D171, G184, and N283. A Fe cation-binding site is contributed by D311.

Belongs to the KAE1 / TsaD family. Fe(2+) serves as cofactor.

Its subcellular location is the cytoplasm. The enzyme catalyses L-threonylcarbamoyladenylate + adenosine(37) in tRNA = N(6)-L-threonylcarbamoyladenosine(37) in tRNA + AMP + H(+). In terms of biological role, required for the formation of a threonylcarbamoyl group on adenosine at position 37 (t(6)A37) in tRNAs that read codons beginning with adenine. Is involved in the transfer of the threonylcarbamoyl moiety of threonylcarbamoyl-AMP (TC-AMP) to the N6 group of A37, together with TsaE and TsaB. TsaD likely plays a direct catalytic role in this reaction. The protein is tRNA N6-adenosine threonylcarbamoyltransferase of Prochlorococcus marinus (strain MIT 9215).